We begin with the raw amino-acid sequence, 309 residues long: Tagatose-6-phosphate kinase (309 aa).

This sequence belongs to the carbohydrate kinase PfkB family. LacC subfamily.

The catalysed reaction is D-tagatofuranose 6-phosphate + ATP = D-tagatofuranose 1,6-bisphosphate + ADP + H(+). It participates in carbohydrate metabolism; D-tagatose 6-phosphate degradation; D-glyceraldehyde 3-phosphate and glycerone phosphate from D-tagatose 6-phosphate: step 1/2. The polypeptide is Tagatose-6-phosphate kinase (Streptococcus sanguinis (strain SK36)).